The primary structure comprises 22 residues: Ocellatin-LB1 (22 aa).

Position 22 is a methionine amide (methionine 22).

As to expression, expressed by the skin glands.

It localises to the secreted. Antibacterial peptide that inhibits Gram-negative bacteria A.actinomycetemcomitans ATCC 29522 (MIC=222.37 uM) and E.coli ATCC 25922 (MIC=114.04 uM). Also has antifungal activity against C.albicans ATCC 18804 (MIC=233.55 uM) and C.lusitaniae ATCC 56936 (MIC=233.55 uM). No activity against the Gram-positive bacterium S.aureus ATCC 25923. Shows virtually no hemolytic activity towards rabbit erythrocytes. This is Ocellatin-LB1 from Leptodactylus labyrinthicus (Labyrinth frog).